The primary structure comprises 134 residues: Tripartite terminase subunit 2 (134 aa).

The protein belongs to the herpesviridae TRM2 protein family. In terms of assembly, associates with TRM1 and TRM3 to form the tripartite terminase complex.

It is found in the host nucleus. Its function is as follows. Component of the molecular motor that translocates viral genomic DNA in empty capsid during DNA packaging. Forms a tripartite terminase complex together with TRM1 and TRM3 in the host cytoplasm. Once the complex reaches the host nucleus, it interacts with the capsid portal vertex. This portal forms a ring in which genomic DNA is translocated into the capsid. The polypeptide is Tripartite terminase subunit 2 (Gallus gallus (Chicken)).